The chain runs to 114 residues: rRNA-processing protein cgrA (114 aa).

The span at methionine 1–asparagine 11 shows a compositional bias: polar residues. Residues methionine 1–serine 114 are disordered. The span at tyrosine 39–lysine 93 shows a compositional bias: basic and acidic residues. A coiled-coil region spans residues glutamate 40–arginine 101. Basic residues predominate over residues methionine 94–serine 114.

It belongs to the CGR1 family.

Its subcellular location is the nucleus. The protein localises to the nucleolus. Involved in nucleolar integrity and required for processing of the pre-rRNA for the 60S ribosome subunit. This Aspergillus fumigatus (strain ATCC MYA-4609 / CBS 101355 / FGSC A1100 / Af293) (Neosartorya fumigata) protein is rRNA-processing protein cgrA (cgrA).